Reading from the N-terminus, the 379-residue chain is 1-deoxy-D-xylulose 5-phosphate reductoisomerase (379 aa).

7 residues coordinate NADPH: T10, G11, S12, I13, R38, N39, and N121. K122 is a binding site for 1-deoxy-D-xylulose 5-phosphate. Residue E123 participates in NADPH binding. Residue D147 coordinates Mn(2+). 1-deoxy-D-xylulose 5-phosphate contacts are provided by S148, E149, S173, and H196. E149 serves as a coordination point for Mn(2+). G202 serves as a coordination point for NADPH. Residues S209, N214, K215, and E218 each coordinate 1-deoxy-D-xylulose 5-phosphate. E218 lines the Mn(2+) pocket.

This sequence belongs to the DXR family. Mg(2+) is required as a cofactor. Mn(2+) serves as cofactor.

The catalysed reaction is 2-C-methyl-D-erythritol 4-phosphate + NADP(+) = 1-deoxy-D-xylulose 5-phosphate + NADPH + H(+). It functions in the pathway isoprenoid biosynthesis; isopentenyl diphosphate biosynthesis via DXP pathway; isopentenyl diphosphate from 1-deoxy-D-xylulose 5-phosphate: step 1/6. Functionally, catalyzes the NADPH-dependent rearrangement and reduction of 1-deoxy-D-xylulose-5-phosphate (DXP) to 2-C-methyl-D-erythritol 4-phosphate (MEP). The chain is 1-deoxy-D-xylulose 5-phosphate reductoisomerase from Chlamydia trachomatis serovar A (strain ATCC VR-571B / DSM 19440 / HAR-13).